The chain runs to 1067 residues: Ubiquitin carboxyl-terminal hydrolase 26 (1067 aa).

The span at methionine 1–arginine 12 shows a compositional bias: basic residues. A disordered region spans residues methionine 1–serine 22. In terms of domain architecture, USP spans alanine 106–arginine 442. Cysteine 115 serves as the catalytic Nucleophile. Histidine 359 serves as the catalytic Proton acceptor. Positions lysine 385–serine 418 are disordered. Residues glutamate 390–serine 418 show a composition bias toward polar residues. 3 DUSP domains span residues asparagine 503–cysteine 595, aspartate 610–cysteine 711, and threonine 738–isoleucine 861. The Ubiquitin-like domain maps to phenylalanine 948–glutamate 1031.

The protein belongs to the peptidase C19 family. Expressed in seedlings, roots, stems, leaves and inflorescences.

The protein localises to the nucleus. The enzyme catalyses Thiol-dependent hydrolysis of ester, thioester, amide, peptide and isopeptide bonds formed by the C-terminal Gly of ubiquitin (a 76-residue protein attached to proteins as an intracellular targeting signal).. In terms of biological role, recognizes and hydrolyzes the peptide bond at the C-terminal Gly of ubiquitin. Involved in the processing of poly-ubiquitin precursors as well as that of ubiquitinated proteins. Deubiquitinates H2BK143ub1 of histone H2B. The chain is Ubiquitin carboxyl-terminal hydrolase 26 (UBP26) from Arabidopsis thaliana (Mouse-ear cress).